The following is a 633-amino-acid chain: Copine-7 (633 aa).

C2 domains lie at 2–133 (SAGS…MRVS) and 212–339 (NAGK…AQWD). The Ca(2+) site is built by D245, D251, D307, D309, and D315. Residues 382–581 (HFTVAIDFTA…PALRDIVQFV (200 aa)) form the VWFA domain.

This sequence belongs to the copine family. Ca(2+) is required as a cofactor. As to expression, expressed in the brain, testis, thymus and small intestine.

It localises to the cytoplasm. It is found in the nucleus. The protein resides in the cell membrane. In terms of biological role, calcium-dependent phospholipid-binding protein that may play a role in calcium-mediated intracellular processes. In Homo sapiens (Human), this protein is Copine-7.